The sequence spans 99 residues: Malonate decarboxylase acyl carrier protein (99 aa).

Ser-25 bears the O-(phosphoribosyl dephospho-coenzyme A)serine mark.

The protein belongs to the MdcC family. Post-translationally, covalently binds the prosthetic group of malonate decarboxylase.

The protein resides in the cytoplasm. Subunit of malonate decarboxylase, it is an acyl carrier protein to which acetyl and malonyl thioester residues are bound via a 2'-(5''-phosphoribosyl)-3'-dephospho-CoA prosthetic group and turn over during the catalytic mechanism. The chain is Malonate decarboxylase acyl carrier protein from Pseudomonas paraeruginosa (strain DSM 24068 / PA7) (Pseudomonas aeruginosa (strain PA7)).